The following is a 290-amino-acid chain: MEWSLTQSKLLAFHRLMRTDKPIGALLLLWPTLWALWVATPGMPQLWILAVFVAGVWLMRAAGCVVNDYADRKFDGHVKRTVNRPLPSGAVTEKEARNLFVVLVLLAFLLVLTLNAMTILLSVAALALAWVYPFMKRYTHLPQVVLGAAFGWSIPMAFAAVSESLPLSCWLMFLANILWAVAYDTQYAMVDRDDDIKIGIKSTAILFGRYDTLIIGILQLGVMALMALIGWLNGLGWGYYWAVLVAGALFVYQQKLIANREREACFKAFMNNNYVGLVLFLGLAMSYWHF.

8 helical membrane-spanning segments follow: residues 23–43 (IGALLLLWPTLWALWVATPGM), 46–66 (LWILAVFVAGVWLMRAAGCVV), 99–119 (LFVVLVLLAFLLVLTLNAMTI), 141–161 (LPQVVLGAAFGWSIPMAFAAV), 163–183 (ESLPLSCWLMFLANILWAVAY), 212–232 (TLIIGILQLGVMALMALIGWL), 233–253 (NGLGWGYYWAVLVAGALFVYQ), and 268–288 (AFMNNNYVGLVLFLGLAMSYW).

It belongs to the UbiA prenyltransferase family. Requires Mg(2+) as cofactor.

The protein resides in the cell inner membrane. It catalyses the reaction all-trans-octaprenyl diphosphate + 4-hydroxybenzoate = 4-hydroxy-3-(all-trans-octaprenyl)benzoate + diphosphate. It participates in cofactor biosynthesis; ubiquinone biosynthesis. Its function is as follows. Catalyzes the prenylation of para-hydroxybenzoate (PHB) with an all-trans polyprenyl group. Mediates the second step in the final reaction sequence of ubiquinone-8 (UQ-8) biosynthesis, which is the condensation of the polyisoprenoid side chain with PHB, generating the first membrane-bound Q intermediate 3-octaprenyl-4-hydroxybenzoate. In Salmonella typhi, this protein is 4-hydroxybenzoate octaprenyltransferase.